Here is a 539-residue protein sequence, read N- to C-terminus: GMP synthase [glutamine-hydrolyzing] (539 aa).

Residues 4 to 202 (KVLILDFGSQ…VLEIAGAKPD (199 aa)) enclose the Glutamine amidotransferase type-1 domain. The active-site Nucleophile is the Cys-81. Active-site residues include His-176 and Glu-178. Positions 203–395 (WVMRDHIDEA…LGLPHEMVYR (193 aa)) constitute a GMPS ATP-PPase domain. 230 to 236 (SGGVDSS) contributes to the ATP binding site.

As to quaternary structure, homodimer.

The enzyme catalyses XMP + L-glutamine + ATP + H2O = GMP + L-glutamate + AMP + diphosphate + 2 H(+). Its pathway is purine metabolism; GMP biosynthesis; GMP from XMP (L-Gln route): step 1/1. Functionally, catalyzes the synthesis of GMP from XMP. The protein is GMP synthase [glutamine-hydrolyzing] of Ralstonia pickettii (strain 12J).